Consider the following 846-residue polypeptide: Protein kintoun (846 aa).

Disordered stretches follow at residues 1 to 21 (MSTAAGSRKKHSKLHNEERAD), 377 to 412 (DSGVELHSNSESPVEDDADGYMPETPELETAAPPDP), 581 to 657 (HTSI…DSTI), and 743 to 846 (HDSS…DDEI). Position 378 is a phosphoserine (Ser-378). Positions 399–408 (PETPELETAA) are enriched in low complexity. Composition is skewed to basic residues over residues 596-612 (LHKKPSKKQRKRNKKQR) and 750-766 (QRKKNQKRRNCKLRAQQ). Ser-770 bears the Phosphoserine mark. Residues 821–832 (TRQDHADADAKN) are compositionally biased toward basic and acidic residues.

This sequence belongs to the PIH1 family. Kintoun subfamily. Interacts with Pp1alpha-96A, Pp1-87B, Pp1-13C and flw.

The protein resides in the cytoplasm. In terms of biological role, required for cytoplasmic pre-assembly of axonemal dyneins, thereby playing a central role in motility in cilia and flagella. Involved in pre-assembly of dynein arm complexes in the cytoplasm before intraflagellar transport loads them for the ciliary compartment. The chain is Protein kintoun from Drosophila pseudoobscura pseudoobscura (Fruit fly).